We begin with the raw amino-acid sequence, 265 residues long: Orotidine 5'-phosphate decarboxylase (265 aa).

Substrate-binding positions include D38, 60 to 62 (KTH), 91 to 100 (DRKFADIGNT), Y213, and R232. The Proton donor role is filled by K93.

Belongs to the OMP decarboxylase family.

It carries out the reaction orotidine 5'-phosphate + H(+) = UMP + CO2. Its pathway is pyrimidine metabolism; UMP biosynthesis via de novo pathway; UMP from orotate: step 2/2. This chain is Orotidine 5'-phosphate decarboxylase (pyrG), found in Mucor circinelloides f. lusitanicus (Mucor racemosus var. lusitanicus).